The chain runs to 207 residues: MANHQIKAQRRKDEGKGASRRLRHAGMIPAIIYGGEQRPVSIQLNHEQIWLAQQNEWFYSSILDLNVDGAGAEKVLLRDLQRHPYRQLVMHVDFQRVSSDAKLSVAVPLHFINQATSPAGKVGGVVITHELNEVQVSCLPKDLPEFIEVDLSTLNVGHVIHLSDITFPIGVELSTRLDKEHDMAVVIAKHAVIEDDAPAEEGEGDSK.

Residues 1–20 (MANHQIKAQRRKDEGKGASR) form a disordered region.

The protein belongs to the bacterial ribosomal protein bL25 family. CTC subfamily. As to quaternary structure, part of the 50S ribosomal subunit; part of the 5S rRNA/L5/L18/L25 subcomplex. Contacts the 5S rRNA. Binds to the 5S rRNA independently of L5 and L18.

Functionally, this is one of the proteins that binds to the 5S RNA in the ribosome where it forms part of the central protuberance. The protein is Large ribosomal subunit protein bL25 of Xylella fastidiosa (strain M23).